The sequence spans 928 residues: Interphotoreceptor matrix proteoglycan 1 (928 aa).

The N-terminal stretch at 1–20 (MHLKTGLIFLAICLALQVQG) is a signal peptide. A disordered region spans residues 26 to 50 (SKTNHGEAKQLADASGSDKTERTTK). Basic and acidic residues predominate over residues 29-49 (NHGEAKQLADASGSDKTERTT). A glycan (N-linked (GlcNAc...) asparagine) is linked at Asn-143. Positions 164–182 (QERKDEISTDKTGGKKLED) are enriched in basic and acidic residues. A disordered region spans residues 164-191 (QERKDEISTDKTGGKKLEDIPSVSTGPP). N-linked (GlcNAc...) asparagine glycosylation is found at Asn-203 and Asn-212. The SEA 1 domain occupies 231 to 356 (AEQMVEFSVT…TKLTVTDLQQ (126 aa)). 2 disordered regions span residues 441–481 (LSRE…TEDI) and 494–522 (ALVS…NDLI). The segment covering 466 to 477 (PSREPPHDRSPD) has biased composition (basic and acidic residues). In terms of domain architecture, SEA 2 spans 735 to 848 (KELVVFFSLR…YSLDIEPADQ (114 aa)). Residues Asn-756 and Asn-780 are each glycosylated (N-linked (GlcNAc...) asparagine). The Heparin- and hyaluronan-binding signature appears at 785–793 (KQLEILNFR). N-linked (GlcNAc...) asparagine glycans are attached at residues Asn-794 and Asn-812.

Post-translationally, highly glycosylated (N- and O-linked carbohydrates and sialic acid). In terms of tissue distribution, abundantly expressed in the retina (at protein level). Localizes to the photoreceptor layer of the interphotoreceptor matrix of the retina (at protein level).

It localises to the cell projection. The protein resides in the cilium. It is found in the photoreceptor outer segment. Its subcellular location is the secreted. The protein localises to the extracellular space. It localises to the extracellular matrix. The protein resides in the interphotoreceptor matrix. It is found in the photoreceptor inner segment. Chondroitin sulfate-, heparin- and hyaluronan-binding protein. May serve to form a basic macromolecular scaffold comprising the insoluble interphotoreceptor matrix. The polypeptide is Interphotoreceptor matrix proteoglycan 1 (Gallus gallus (Chicken)).